The following is a 467-amino-acid chain: tRNA-2-methylthio-N(6)-dimethylallyladenosine synthase (467 aa).

One can recognise an MTTase N-terminal domain in the interval 22–138 (GSYWITTFGC…LETLLNKVET (117 aa)). 6 residues coordinate [4Fe-4S] cluster: cysteine 31, cysteine 67, cysteine 101, cysteine 173, cysteine 177, and cysteine 180. The Radical SAM core domain maps to 159 to 396 (RDSSICAWVN…NSLVEIKAKE (238 aa)). The TRAM domain occupies 399–467 (VRYKDRVEEV…AFSLSGVIEN (69 aa)).

Belongs to the methylthiotransferase family. MiaB subfamily. In terms of assembly, monomer. [4Fe-4S] cluster serves as cofactor.

It localises to the cytoplasm. It carries out the reaction N(6)-dimethylallyladenosine(37) in tRNA + (sulfur carrier)-SH + AH2 + 2 S-adenosyl-L-methionine = 2-methylsulfanyl-N(6)-dimethylallyladenosine(37) in tRNA + (sulfur carrier)-H + 5'-deoxyadenosine + L-methionine + A + S-adenosyl-L-homocysteine + 2 H(+). Its function is as follows. Catalyzes the methylthiolation of N6-(dimethylallyl)adenosine (i(6)A), leading to the formation of 2-methylthio-N6-(dimethylallyl)adenosine (ms(2)i(6)A) at position 37 in tRNAs that read codons beginning with uridine. This is tRNA-2-methylthio-N(6)-dimethylallyladenosine synthase from Prochlorococcus marinus (strain MIT 9211).